Consider the following 349-residue polypeptide: Putative phytanoyl-CoA dioxygenase (349 aa).

2-oxoglutarate contacts are provided by residues Lys-118 and 169 to 171 (HLD). His-169 and Asp-171 together coordinate Fe cation.

This sequence belongs to the PhyH family. It depends on Fe cation as a cofactor. L-ascorbate is required as a cofactor.

The catalysed reaction is phytanoyl-CoA + 2-oxoglutarate + O2 = 2-hydroxyphytanoyl-CoA + succinate + CO2. It participates in lipid metabolism; fatty acid metabolism. Converts phytanoyl-CoA to 2-hydroxyphytanoyl-CoA. This is Putative phytanoyl-CoA dioxygenase from Dictyostelium discoideum (Social amoeba).